Reading from the N-terminus, the 121-residue chain is Estrogen receptor (121 aa).

Residues 1-121 (LFAPNLLLDR…IRHMSNKGME (121 aa)) form the NR LBD domain. A lipid anchor (S-palmitoyl cysteine) is attached at cysteine 45.

The protein belongs to the nuclear hormone receptor family. NR3 subfamily. Binds DNA as a homodimer. Can form a heterodimer with ESR2. Interacts with coactivator NCOA5. Interacts with NCOA7; the interaction is ligand-inducible. Interacts with AKAP13, CUEDC2, HEXIM1, KDM5A, MAP1S, PELP1, SMARD1, and UBE1C. Interacts with MUC1; the interaction is stimulated by 7 beta-estradiol (E2) and enhances ERS1-mediated transcription. Interacts with DNTTIP2, and UIMC1. Interacts with KMT2D/MLL2. Interacts with ATAD2; the interaction is enhanced by estradiol. Interacts with KIF18A and LDB1. Interacts with RLIM (via its C-terminus). Interacts with MACROD1. Interacts with SH2D4A and PLCG. Interacts with SH2D4A; the interaction blocks binding to PLCG and inhibits estrogen-induced cell proliferation. Interacts with DYNLL1. Interacts with CCDC62; the interaction requires estradiol and appears to enhance the transcription of target genes. Interacts with NR2C1; the interaction prevents homodimerization of ESR1 and suppresses its transcriptional activity and cell growth. Interacts with DNAAF4. Interacts with PRMT2. Interacts with PI3KR1 or PIK3R2, SRC and PTK2/FAK1. Interacts with RBFOX2. Interacts with EP300; the interaction is estrogen-dependent and enhanced by CITED1. Interacts with CITED1; the interaction is estrogen-dependent. Interacts with FAM120B, FOXL2, PHB2 and SLC30A9. Interacts with coactivators NCOA3 and NCOA6. Interacts with STK3/MST2 only in the presence of SAV1 and vice-versa. Binds to CSNK1D. Interacts with NCOA2; NCOA2 can interact with ESR1 AF-1 and AF-2 domains simultaneously and mediate their transcriptional synergy. Interacts with DDX5. Interacts with NCOA1; the interaction seems to require a self-association of N-terminal and C-terminal regions. Interacts with ZNF366, DDX17, NFKB1, RELA, SP1 and SP3. Interacts with NRIP1. Interacts with GPER1; the interaction occurs in an estrogen-dependent manner. Interacts with CLOCK and the interaction is stimulated by estrogen. Interacts with TRIP4 (ufmylated); estrogen dependent. Interacts with LMTK3; the interaction phosphorylates ESR1 (in vitro) and protects it against proteasomal degradation. Interacts with CCAR2 (via N-terminus) in a ligand-independent manner. Interacts with ZFHX3. Interacts with SFR1 in a ligand-dependent and -independent manner. Interacts with DCAF13, LATS1 and DCAF1; regulates ESR1 ubiquitination and ubiquitin-mediated proteasomal degradation. Interacts (via DNA-binding domain) with POU4F2 (C-terminus); this interaction increases the estrogen receptor ESR1 transcriptional activity in a DNA- and ligand 17-beta-estradiol-independent manner. Interacts with ESRRB isoform 1. Interacts with UBE3A and WBP2. Interacts with GTF2B. Interacts with RBM39. In the absence of hormonal ligand, interacts with TACC1. Interacts with BAG1; the interaction is promoted in the absence of estradiol (17-beta-estradiol/E2). Interacts with and ubiquitinated by STUB1; the interaction is promoted in the absence of estradiol (17-beta-estradiol/E2). Interacts with NEDD8. In terms of processing, ubiquitinated; regulated by LATS1 via DCAF1 it leads to ESR1 proteasomal degradation. Deubiquitinated by OTUB1. Ubiquitinated by STUB1/CHIP; in the CA1 hippocampal region following loss of endogenous circulating estradiol (17-beta-estradiol/E2). Ubiquitinated by UBR5, leading to its degradation: UBR5 specifically recognizes and binds ligand-bound ESR1 when it is not associated with coactivators (NCOAs). In presence of NCOAs, the UBR5-degron is not accessible, preventing its ubiquitination and degradation. Palmitoylated at Cys-45 by ZDHHC7 and ZDHHC21. Palmitoylation is required for plasma membrane targeting and for rapid intracellular signaling via ERK and AKT kinases and cAMP generation, but not for signaling mediated by the nuclear hormone receptor. Post-translationally, phosphorylated by cyclin A/CDK2 and CK1. Phosphorylation probably enhances transcriptional activity. Dephosphorylation by PPP5C inhibits its transactivation activity. Phosphorylated by LMTK3 (in vitro). In terms of processing, dimethylated by PRMT1. Demethylated by JMJD6.

The protein localises to the nucleus. It localises to the cytoplasm. It is found in the golgi apparatus. Its subcellular location is the cell membrane. Nuclear hormone receptor. The steroid hormones and their receptors are involved in the regulation of eukaryotic gene expression and affect cellular proliferation and differentiation in target tissues. Ligand-dependent nuclear transactivation involves either direct homodimer binding to a palindromic estrogen response element (ERE) sequence or association with other DNA-binding transcription factors, such as AP-1/c-Jun, c-Fos, ATF-2, Sp1 and Sp3, to mediate ERE-independent signaling. Ligand binding induces a conformational change allowing subsequent or combinatorial association with multiprotein coactivator complexes through LXXLL motifs of their respective components. Mutual transrepression occurs between the estrogen receptor (ER) and NF-kappa-B in a cell-type specific manner. Decreases NF-kappa-B DNA-binding activity and inhibits NF-kappa-B-mediated transcription from the IL6 promoter and displace RELA/p65 and associated coregulators from the promoter. Recruited to the NF-kappa-B response element of the CCL2 and IL8 promoters and can displace CREBBP. Present with NF-kappa-B components RELA/p65 and NFKB1/p50 on ERE sequences. Can also act synergistically with NF-kappa-B to activate transcription involving respective recruitment adjacent response elements; the function involves CREBBP. Can activate the transcriptional activity of TFF1. Also mediates membrane-initiated estrogen signaling involving various kinase cascades. Essential for MTA1-mediated transcriptional regulation of BRCA1 and BCAS3. Maintains neuronal survival in response to ischemic reperfusion injury when in the presence of circulating estradiol (17-beta-estradiol/E2). The protein is Estrogen receptor (ESR1) of Macaca mulatta (Rhesus macaque).